Reading from the N-terminus, the 451-residue chain is MRECISIHIGQAGIQVGNACWELYCLEHGIQADGQMPGDKTIGGGDDAFNTFFSETGAGKHVPRAVFVDLEPTVIDEVRTGTYRQLFHPEQLISGKEDAANNFARGHYTIGKEIVDLCLDRIRKLADNCTGLQGFLVFNAVGGGTGSGLGSLLLERLSVDYGKKSKLGFTVYPSPQVSTSVVEPYNSVLSTHSLLEHTDVAILLDNEAIYDICRRSLDIERPTYTNLNRLVSQVISSLTASLRFDGALNVDVNEFQTNLVPYPRIHFMLSSYAPVISAEKAYHEQLSVAEITNSAFEPSSMMAKCDPRHGKYMACCLMYRGDVVPKDVNAAVATIKTKRTIQFVDWCPTGFKCGINYQPPSVVPGGDLAKVQRAVCMISNSTSVVEVFSRIDHKFDLMYAKRAFVHWYVGEGMEEGEFSEAREDLAALEKDYEEVGAEFDEGEEGDDGDEY.

Gln11 is a binding site for GTP. An N6-acetyllysine modification is found at Lys40. Glu71, Gly144, Thr145, Thr179, Asn206, and Asn228 together coordinate GTP. Glu71 is a Mg(2+) binding site. Glu254 is an active-site residue.

This sequence belongs to the tubulin family. Dimer of alpha and beta chains. A typical microtubule is a hollow water-filled tube with an outer diameter of 25 nm and an inner diameter of 15 nM. Alpha-beta heterodimers associate head-to-tail to form protofilaments running lengthwise along the microtubule wall with the beta-tubulin subunit facing the microtubule plus end conferring a structural polarity. Microtubules usually have 13 protofilaments but different protofilament numbers can be found in some organisms and specialized cells. Mg(2+) is required as a cofactor. In terms of processing, undergoes a tyrosination/detyrosination cycle, the cyclic removal and re-addition of a C-terminal tyrosine residue by the enzymes tubulin tyrosine carboxypeptidase (TTCP) and tubulin tyrosine ligase (TTL), respectively. Post-translationally, acetylation of alpha chains at Lys-40 stabilizes microtubules and affects affinity and processivity of microtubule motors. This modification has a role in multiple cellular functions, ranging from cell motility, cell cycle progression or cell differentiation to intracellular trafficking and signaling.

It localises to the cytoplasm. The protein resides in the cytoskeleton. It carries out the reaction GTP + H2O = GDP + phosphate + H(+). In terms of biological role, tubulin is the major constituent of microtubules, a cylinder consisting of laterally associated linear protofilaments composed of alpha- and beta-tubulin heterodimers. Microtubules grow by the addition of GTP-tubulin dimers to the microtubule end, where a stabilizing cap forms. Below the cap, tubulin dimers are in GDP-bound state, owing to GTPase activity of alpha-tubulin. The protein is Tubulin alpha-2 chain (TUBA2) of Zea mays (Maize).